Here is a 567-residue protein sequence, read N- to C-terminus: Fanconi anemia group C protein homolog (567 aa).

Belongs to the multisubunit FA complex composed of FANCA, FANCB, FANCC, FANCE, FANCF, FANCG, FANCL/PHF9 and FANCM. This complex may also include HSP70. Interacts with ZBTB32. Upon IFNG induction, interacts with STAT1. Interacts with CDK1. Interacts with EIF2AK2.

Its subcellular location is the nucleus. The protein localises to the cytoplasm. Its function is as follows. DNA repair protein that may operate in a postreplication repair or a cell cycle checkpoint function. May be implicated in interstrand DNA cross-link repair and in the maintenance of normal chromosome stability. Upon IFNG induction, may facilitate STAT1 activation by recruiting STAT1 to IFNGR1. This chain is Fanconi anemia group C protein homolog (FANCC), found in Bos taurus (Bovine).